The chain runs to 419 residues: POU domain, class 4, transcription factor 1 (419 aa).

A POU-IV box motif is present at residues 57 to 66; it reads RAEALAAVDI. 2 disordered regions span residues 94–117 and 131–197; these read STVP…GDLL and AGGA…HSLG. Residues 99-108 are compositionally biased toward basic residues; that stretch reads AHHHHHHHHH. Gly residues predominate over residues 131-184; sequence AGGAGAAAGGGGAHDGPGGGGGPGGGGGPGGGPGGGGGGGPGGGGGGPGGGLLG. One can recognise a POU-specific domain in the interval 261 to 338; that stretch reads SDTDPRELEA…LQAWLEEAEG (78 aa). Residues 356-415 constitute a DNA-binding region (homeobox); sequence KRKRTSIAAPEKRSLEAYFAVQPRPSSEKIAAIAEKLDLKKNVVRVWFCNQRQKQKRMKF.

This sequence belongs to the POU transcription factor family. Class-4 subfamily. Interacts (via N-terminus) with RIT2; the interaction controls POU4F1 transactivation activity on some neuronal target genes. Isoform 1 interacts with POU4F2; this interaction inhibits both POU4F1 DNA-binding and transcriptional activities. Isoform 1 interacts (C-terminus) with ESR1 (via DNA-binding domain); this interaction decreases the estrogen receptor ESR1 transcriptional activity in a DNA- and ligand 17-beta-estradiol-independent manner. In terms of tissue distribution, expressed in the brain and the retina. Present in the developing brain, spinal cord and eye.

It localises to the nucleus. It is found in the cytoplasm. Functionally, multifunctional transcription factor with different regions mediating its different effects. Acts by binding (via its C-terminal domain) to sequences related to the consensus octamer motif 5'-ATGCAAAT-3' in the regulatory regions of its target genes. Regulates the expression of specific genes involved in differentiation and survival within a subset of neuronal lineages. It has been shown that activation of some of these genes requires its N-terminal domain, maybe through a neuronal-specific cofactor. Activates BCL2 expression and protects neuronal cells from apoptosis (via the N-terminal domain). Induces neuronal process outgrowth and the coordinate expression of genes encoding synaptic proteins. Exerts its major developmental effects in somatosensory neurons and in brainstem nuclei involved in motor control. Stimulates the binding affinity of the nuclear estrogene receptor ESR1 to DNA estrogen response element (ERE), and hence modulates ESR1-induced transcriptional activity. May positively regulate POU4F2 and POU4F3. Regulates dorsal root ganglion sensory neuron specification and axonal projection into the spinal cord. Plays a role in TNFSF11-mediated terminal osteoclast differentiation. Negatively regulates its own expression interacting directly with a highly conserved autoregulatory domain surrounding the transcription initiation site. Its function is as follows. Able to act as transcription factor, cannot regulate the expression of the same subset of genes than isoform 1. Does not have antiapoptotic effect on neuronal cells. In Homo sapiens (Human), this protein is POU domain, class 4, transcription factor 1.